A 546-amino-acid chain; its full sequence is Amidase FG08078 (546 aa).

Residues K129 and S204 each act as charge relay system in the active site. Catalysis depends on S228, which acts as the Acyl-ester intermediate.

The protein belongs to the amidase family.

Its pathway is mycotoxin biosynthesis. In terms of biological role, amidase; part of the gene cluster that mediates the biosynthesis of butenolide, a mycotoxin that shows antibiotic activity but does not seem to play a major role in the spread of head blight in wheat. Butenolide is derived from glutamic acid via a 4-acetamido-2-butenoic acid intermediate. The predicted function of the NADH:flavin oxidoreductase FG08077, the cytochrome P450 monooxygenase FG08079, the decarboxylase FG08083, and the putative acetyltransferase FG08082 are consistent with this pathway, however, the respective activities of the butelonide biosynthesis cluster enzymes have still to be experimentally determined. This Gibberella zeae (strain ATCC MYA-4620 / CBS 123657 / FGSC 9075 / NRRL 31084 / PH-1) (Wheat head blight fungus) protein is Amidase FG08078.